A 212-amino-acid polypeptide reads, in one-letter code: Leucine efflux protein (212 aa).

6 helical membrane passes run 12–32, 49–69, 71–91, 122–142, 153–173, and 188–208; these read TYLV…LFVL, GVFI…ATLI, TTPI…LYLG, ILSL…VQFI, FFIL…FLII, and LAKV…ARLA.

Belongs to the Rht family.

It localises to the cell inner membrane. It carries out the reaction L-leucine(in) + H(+)(out) = L-leucine(out) + H(+)(in). Its function is as follows. Exporter of leucine. This Escherichia coli O6:K15:H31 (strain 536 / UPEC) protein is Leucine efflux protein (leuE).